The following is a 784-amino-acid chain: Toll-like receptor 2 (784 aa).

Residues 1–20 form the signal peptide; that stretch reads MPRALWTAWVWAVIILSMEG. At 21-587 the chain is on the extracellular side; it reads ASHQASSLSC…ARLSLSECHR (567 aa). Cysteine 30 and cysteine 36 form a disulfide bridge. 19 LRR repeats span residues 54–77, 78–101, 102–125, 126–150, 151–175, 176–199, 200–223, 224–250, 251–278, 279–308, 309–337, 338–361, 362–388, 389–414, 415–437, 438–457, 458–478, 479–500, and 501–524; these read VKSL…RCVN, LKTL…HLRN, LEYL…SLYA, LKFL…HLPN, LRTL…GLIF, LEEL…SIQN, ISHL…IVSS, LDCL…MNTS, VKKL…YVSG, ILEV…HLGN, VETL…LTGK, VKRV…HLKS, LEYL…AWPF, LQTL…TLEN, LNNL…WPGK, MKQL…CLPQ, TLEI…ILPQ, LKEL…FLPV, and LSVM…SFQQ. A glycan (N-linked (GlcNAc...) asparagine) is linked at asparagine 114. Asparagine 199 carries N-linked (GlcNAc...) asparagine glycosylation. Asparagine 248 is a glycosylation site (N-linked (GlcNAc...) asparagine). Cysteine 353 and cysteine 382 form a disulfide bridge. A disulfide bridge connects residues cysteine 432 and cysteine 454. The N-linked (GlcNAc...) asparagine glycan is linked to asparagine 442. Residues 525–579 enclose the LRRCT domain; sequence LKTLEAGGNNFICSCDFLSFTQGQQALGRVLVDWPAEYRCDSPSHVRGQRVQDAR. Residues 588 to 608 traverse the membrane as a helical segment; sequence AAVVSAACCALFLLLLLTGVL. The Cytoplasmic portion of the chain corresponds to 609 to 784; that stretch reads CHRFHGLWYM…WLNLRAAIRS (176 aa). The TIR domain maps to 639 to 782; sequence ICYDAFVSYS…GFWLNLRAAI (144 aa). Residue lysine 754 forms a Glycyl lysine isopeptide (Lys-Gly) (interchain with G-Cter in ubiquitin) linkage. The short motif at 761-778 is the ATG16L1-binding motif element; that stretch reads YLEWPVDETQQEGFWLNL.

It belongs to the Toll-like receptor family. Interacts with LY96, TLR1 and TLR6 (via extracellular domain). TLR2 seems to exist in heterodimers with either TLR1 or TLR6 before stimulation by the ligand. The heterodimers form bigger oligomers in response to their corresponding ligands as well as further heterotypic associations with other receptors such as CD14 and/or CD36. Binds MYD88 (via TIR domain). Interacts with TICAM1. Interacts with CNPY3. Interacts with ATG16L1. Interacts with PPP1R11. Interacts with TICAM2. Interacts with TIRAP. In terms of processing, ubiquitinated at Lys-754 by PPP1R11, leading to its degradation. Deubiquitinated by USP2. Glycosylation of Asn-442 is critical for secretion of the N-terminal ectodomain of TLR2.

The protein resides in the membrane. The protein localises to the cytoplasmic vesicle. Its subcellular location is the phagosome membrane. It is found in the membrane raft. In terms of biological role, cooperates with LY96 to mediate the innate immune response to bacterial lipoproteins and other microbial cell wall components. Cooperates with TLR1 or TLR6 to mediate the innate immune response to bacterial lipoproteins or lipopeptides. Acts via MYD88 and TRAF6, leading to NF-kappa-B activation, cytokine secretion and the inflammatory response. May also promote apoptosis in response to lipoproteins. Forms activation clusters composed of several receptors depending on the ligand, these clusters trigger signaling from the cell surface and subsequently are targeted to the Golgi in a lipid-raft dependent pathway. Forms the cluster TLR2:TLR6:CD14:CD36 in response to diacylated lipopeptides and TLR2:TLR1:CD14 in response to triacylated lipopeptides. The chain is Toll-like receptor 2 (TLR2) from Bubalus bubalis (Domestic water buffalo).